A 1125-amino-acid chain; its full sequence is Tudor domain-containing protein 7 (1125 aa).

The 74-residue stretch at 3-76 folds into the HTH OST-type 1 domain; that stretch reads EADLVSKMLR…SGEITCYAMA (74 aa). Positions 126–157 are disordered; sequence PGFSSDFSVSKKPNPTLLRDKGNSLGVKSDAE. A compositionally biased stretch (polar residues) spans 127 to 138; it reads GFSSDFSVSKKP. Residues 260-329 enclose the HTH OST-type 2 domain; it reads KMDEVQNRIK…GQDLLLYPAK (70 aa). Serine 346 is modified (phosphoserine). Positions 364–433 constitute an HTH OST-type 3 domain; sequence MPGDFKEKVA…PQKAILYAKL (70 aa). Tudor domains follow at residues 540–597 and 730–787; these read TVHV…FCSL and LPFC…FLQE. Positions 881 to 895 are enriched in low complexity; sequence SSGTSSPNSKSGSTP. A disordered region spans residues 881-904; sequence SSGTSSPNSKSGSTPVPGSTGDNF. Serine 886 carries the post-translational modification Phosphoserine. The tract at residues 888-1125 is interaction with CDK17; it reads NSKSGSTPVP…EYLVELSKVN (238 aa). The interval 920–1125 is interaction with CABLES1; that stretch reads TSSLSVEELP…EYLVELSKVN (206 aa).

This sequence belongs to the TDRD7 family. Found in a mRNP complex, at least composed of TDRD1, TDRD6, TDRD7 and DDX4. Found in a complex containing CABLES1, CDK16 and CDK17. Interacts with CABLES1, CDK17 and PIWIL1.

The protein resides in the cytoplasm. Component of specific cytoplasmic RNA granules involved in post-transcriptional regulation of specific genes: probably acts by binding to specific mRNAs and regulating their translation. Required for lens transparency during lens development, by regulating translation of genes such as CRYBB3 and HSPB1 in the developing lens. Also required during spermatogenesis. This Canis lupus familiaris (Dog) protein is Tudor domain-containing protein 7 (TDRD7).